Reading from the N-terminus, the 142-residue chain is Deoxyuridine 5'-triphosphate nucleotidohydrolase (142 aa).

Residues 62 to 64, Asn75, and 79 to 81 contribute to the substrate site; these read RSG and TID.

It belongs to the dUTPase family. Mg(2+) serves as cofactor.

The catalysed reaction is dUTP + H2O = dUMP + diphosphate + H(+). Its pathway is pyrimidine metabolism; dUMP biosynthesis; dUMP from dCTP (dUTP route): step 2/2. This enzyme is involved in nucleotide metabolism: it produces dUMP, the immediate precursor of thymidine nucleotides and it decreases the intracellular concentration of dUTP so that uracil cannot be incorporated into DNA. In Crocosphaera subtropica (strain ATCC 51142 / BH68) (Cyanothece sp. (strain ATCC 51142)), this protein is Deoxyuridine 5'-triphosphate nucleotidohydrolase.